A 151-amino-acid chain; its full sequence is Probable cGMP 3',5'-cyclic phosphodiesterase subunit delta (151 aa).

The protein belongs to the PDE6D/unc-119 family. In terms of assembly, interacts with Pde6.

It localises to the nucleus. It is found in the cytoplasm. The chain is Probable cGMP 3',5'-cyclic phosphodiesterase subunit delta from Drosophila persimilis (Fruit fly).